Reading from the N-terminus, the 994-residue chain is Regulator of telomere elongation helicase 1 homolog (994 aa).

The Helicase ATP-binding domain maps to 15–324 (SKTSIKFPFE…KLIENLRTED (310 aa)). 50-57 (SPTGTGKT) serves as a coordination point for ATP. Positions 142, 160, 169, and 208 each coordinate [4Fe-4S] cluster. Residues 251–254 (DEAH) carry the DEAH box motif. The segment covering 818–831 (KIEKKEKIEPRPIK) has biased composition (basic and acidic residues). A disordered region spans residues 818–896 (KIEKKEKIEP…HVVSGSEPPK (79 aa)). Positions 833–844 (DSSSSSVFSLPT) are enriched in polar residues. Residues 847–856 (DELKVKKWEQ) are compositionally biased toward basic and acidic residues. Polar residues-rich tracts occupy residues 859–869 (DSQTNVSSSSD) and 880–889 (PGNSSGQHVV).

Belongs to the helicase family. RAD3/XPD subfamily.

Its subcellular location is the nucleus. It carries out the reaction ATP + H2O = ADP + phosphate + H(+). Its function is as follows. A probable ATP-dependent DNA helicase implicated in DNA repair and the maintenance of genomic stability. Acts as an anti-recombinase to counteract toxic recombination and limit crossover during meiosis. Regulates meiotic recombination and crossover homeostasis by physically dissociating strand invasion events and thereby promotes noncrossover repair by meiotic synthesis dependent strand annealing (SDSA) as well as disassembly of D loop recombination intermediates. The polypeptide is Regulator of telomere elongation helicase 1 homolog (Caenorhabditis briggsae).